The chain runs to 223 residues: Cytidylate kinase (223 aa).

Residue 10-18 coordinates ATP; it reads GPASSGKST.

The protein belongs to the cytidylate kinase family. Type 1 subfamily.

The protein localises to the cytoplasm. The enzyme catalyses CMP + ATP = CDP + ADP. It carries out the reaction dCMP + ATP = dCDP + ADP. This Streptococcus pneumoniae (strain 70585) protein is Cytidylate kinase.